We begin with the raw amino-acid sequence, 56 residues long: Putative 2-Cys peroxiredoxin BAS1 (56 aa).

This sequence belongs to the peroxiredoxin family. AhpC/Prx1 subfamily. As to quaternary structure, homodimer; disulfide-linked, upon oxidation.

It is found in the plastid. The protein localises to the chloroplast. The catalysed reaction is a hydroperoxide + [thioredoxin]-dithiol = an alcohol + [thioredoxin]-disulfide + H2O. Functionally, thiol-specific peroxidase that catalyzes the reduction of hydrogen peroxide and organic hydroperoxides to water and alcohols, respectively. Plays a role in cell protection against oxidative stress by detoxifying peroxides. May be an antioxidant enzyme particularly in the developing shoot and photosynthesizing leaf. The chain is Putative 2-Cys peroxiredoxin BAS1 from Pinus strobus (Eastern white pine).